A 2019-amino-acid polypeptide reads, in one-letter code: Sodium channel protein type 5 subunit alpha (2019 aa).

Residues 1–129 lie on the Cytoplasmic side of the membrane; it reads MANFLLPRGT…VRRAAVKILV (129 aa). The disordered stretch occupies residues 27-66; the sequence is RMAEKQARGSATSQESREGLPEEEAPRPQLDLQASKKLPD. Ser-36 carries the phosphoserine modification. Position 38 is a phosphothreonine (Thr-38). Basic and acidic residues predominate over residues 41–52; sequence ESREGLPEEEAP. The I repeat unit spans residues 113 to 420; sequence VLSPFHPVRR…VVAMAYEEQN (308 aa). The chain crosses the membrane as a helical span at residues 130 to 149; the sequence is HSLFSMLIMCTILTNCVFMA. The Extracellular portion of the chain corresponds to 150–157; it reads QHDPPPWT. The chain crosses the membrane as a helical span at residues 158-179; the sequence is KYVEYTFTAIYTFESLVKILAR. Topologically, residues 180 to 188 are cytoplasmic; it reads GFCLHAFTF. Residues 189 to 209 traverse the membrane as a helical segment; the sequence is LRDPWNWLDFSVIVMAYTTEF. The Extracellular segment spans residues 210-216; it reads VDLGNVS. N-linked (GlcNAc...) asparagine glycosylation is present at Asn-214. The helical transmembrane segment at 217–236 threads the bilayer; the sequence is ALRTFRVLRALKTISVISGL. Residues 237–249 are Cytoplasmic-facing; the sequence is KTIVGALIQSVKK. The helical transmembrane segment at 250–272 threads the bilayer; sequence LADVMVLTVFCLSVFALIGLQLF. Over 273 to 357 the chain is Extracellular; it reads MGNLRHKCVR…PDHGYTSFDS (85 aa). Cys-280 and Cys-335 form a disulfide bridge. 5 N-linked (GlcNAc...) asparagine glycosylation sites follow: Asn-283, Asn-288, Asn-291, Asn-318, and Asn-328. The segment at residues 358–378 is an intramembrane region (pore-forming); it reads FAWAFLALFRLMTQDCWERLY. The Extracellular portion of the chain corresponds to 379 to 386; sequence QQTLRSAG. Residues 387 to 413 form a helical membrane-spanning segment; the sequence is KIYMIFFMLVIFLGSFYLVNLILAVVA. Over 414–719 the chain is Cytoplasmic; that stretch reads MAYEEQNQAT…VKFVVMDPFA (306 aa). Phosphoserine occurs at positions 457, 460, 483, and 484. Disordered stretches follow at residues 461-575 and 610-647; these read LEMS…TQGQ and EATS…TPQA. Thr-486 is modified (phosphothreonine). Over residues 491 to 503 the composition is skewed to basic and acidic residues; sequence DDRLPKSDSEDGP. Phosphoserine occurs at positions 497 and 510. Positions 507–528 are enriched in polar residues; it reads NQLSLTHGLSRTSMRPRSSRGS. Arg-526 bears the Dimethylated arginine; alternate mark. At Arg-526 the chain carries Omega-N-methylarginine; alternate. 2 positions are modified to phosphoserine: Ser-539 and Ser-571. Phosphoserine occurs at positions 664 and 667. Residues 699 to 971 form an II repeat; sequence CCPLWMSIKQ…QLALARIQRG (273 aa). The chain crosses the membrane as a helical span at residues 720 to 737; it reads DLTITMCIVLNTLFMALE. The Extracellular portion of the chain corresponds to 738–746; the sequence is HYNMTAEFE. N-linked (GlcNAc...) asparagine glycosylation is present at Asn-740. Residues 747–769 form a helical membrane-spanning segment; the sequence is EMLQVGNLVFTGIFTAEMTFKII. Residues 770–775 lie on the Cytoplasmic side of the membrane; that stretch reads ALDPYY. A helical transmembrane segment spans residues 776–796; the sequence is YFQQGWNIFDSIIVILSLMEL. The Extracellular portion of the chain corresponds to 797–806; that stretch reads GLSRMGNLSV. Residue Asn-803 is glycosylated (N-linked (GlcNAc...) asparagine). The chain crosses the membrane as a helical span at residues 807–821; that stretch reads LRSFRLLRVFKLAKS. Residues 822–838 lie on the Cytoplasmic side of the membrane; sequence WPTLNTLIKIIGNSVGA. The chain crosses the membrane as a helical span at residues 839-860; sequence LGNLTLVLAIIVFIFAVVGMQL. The Extracellular portion of the chain corresponds to 861 to 886; that stretch reads FGKNYSELRHRISDSGLLPRWHMMDF. An N-linked (GlcNAc...) asparagine glycan is attached at Asn-864. Positions 887–905 form an intramembrane region, pore-forming; that stretch reads FHAFLIIFRILCGEWIETM. The Extracellular portion of the chain corresponds to 906–914; it reads WDCMEVSGQ. Cys-908 and Cys-917 are disulfide-bonded. The helical transmembrane segment at 915-943 threads the bilayer; it reads SLCLLVFLLVMVIGNLVVLNLFLALLLSS. Over 944–1205 the chain is Cytoplasmic; that stretch reads FSADNLTAPD…LRKTCYRIVE (262 aa). Residues 1000 to 1144 are disordered; that stretch reads HSQLPSCIAA…EDSYSEGSTA (145 aa). Basic and acidic residues predominate over residues 1017-1036; that stretch reads EVEKAPPARKETRFEEDKRP. Residues 1056–1075 show a composition bias toward acidic residues; it reads SDTDDQEEDEENSLGTEEEE. Residues 1098 to 1115 are compositionally biased toward low complexity; sequence SQVSETTSSEAEASTSQA. The stretch at 1189 to 1503 is one III repeat; it reads PGKVWWRLRK…KKYYNAMKKL (315 aa). A helical transmembrane segment spans residues 1206–1227; sequence HSWFETFIIFMILLSSGALAFE. Over 1228–1238 the chain is Extracellular; that stretch reads DIYLEERKTIK. Residues 1239 to 1261 form a helical membrane-spanning segment; the sequence is VLLEYADKMFTYVFVLEMLLKWV. Over 1262-1270 the chain is Cytoplasmic; the sequence is AYGFKKYFT. A helical transmembrane segment spans residues 1271–1293; the sequence is NAWCWLDFLIVDVSLVSLVANTL. The Extracellular portion of the chain corresponds to 1294-1299; it reads GFAEMG. The chain crosses the membrane as a helical span at residues 1300–1319; the sequence is PIKSLRTLRALRPLRALSRF. Over 1320–1332 the chain is Cytoplasmic; it reads EGMRVVVNALVGA. The helical transmembrane segment at 1333–1357 threads the bilayer; it reads IPSIMNVLLVCLIFWLIFSIMGVNL. The Extracellular portion of the chain corresponds to 1358–1402; sequence FAGKFGRCINQTEGDLPLNYTIVNNKSECESFNVTGELYWTKVKV. N-linked (GlcNAc...) asparagine glycosylation is found at Asn-1367, Asn-1376, Asn-1382, and Asn-1390. Positions 1403 to 1424 form an intramembrane region, pore-forming; sequence NFDNVGAGYLALLQVATFKGWM. Topologically, residues 1425–1447 are extracellular; the sequence is DIMYAAVDSRGYEEQPQWEDNLY. A helical transmembrane segment spans residues 1448–1472; that stretch reads MYIYFVVFIIFGSFFTLNLFIGVII. The Cytoplasmic portion of the chain corresponds to 1473-1530; the sequence is DNFNQQKKKLGGQDIFMTEEQKKYYNAMKKLGSKKPQKPIPRPLNKYQGFIFDIVTKQ. Ser-1505 carries the post-translational modification Phosphoserine; by PKC. The IV repeat unit spans residues 1512–1809; sequence IPRPLNKYQG…WEKFDPEATQ (298 aa). Residues 1531–1549 traverse the membrane as a helical segment; that stretch reads AFDVTIMFLICLNMVTMMV. Topologically, residues 1550–1560 are extracellular; it reads ETDDQSPEKVN. A helical transmembrane segment spans residues 1561 to 1582; the sequence is ILAKINLLFVAIFTGECIVKMA. Residues 1583–1591 are Cytoplasmic-facing; that stretch reads ALRHYYFTN. Residues 1592-1614 traverse the membrane as a helical segment; sequence SWNIFDFVVVILSIVGTVLSDII. Over 1615–1621 the chain is Extracellular; the sequence is QKYFFSP. The helical transmembrane segment at 1622–1642 threads the bilayer; it reads TLFRVIRLARIGRILRLIRGA. The Cytoplasmic portion of the chain corresponds to 1643 to 1652; the sequence is KGIRTLLFAL. A helical transmembrane segment spans residues 1653-1681; that stretch reads MMSLPALFNIGLLLFLVMFIYSIFGMANF. The Extracellular portion of the chain corresponds to 1682–1699; it reads AYVKWEAGIDDMFNFQTF. The pore-forming intramembrane region spans 1700–1716; it reads ANSMLCLFQITTSAGWD. At 1717–1747 the chain is on the extracellular side; the sequence is GLLSPILNTGPPYCDPNLPNSNGSRGNCGSP. Residues 1748–1773 form a helical membrane-spanning segment; the sequence is AVGILFFTTYIIISFLIVVNMYIAII. At 1774-2019 the chain is on the cytoplasmic side; sequence LENFSVATEE…SPDRDRESIV (246 aa). The segment at 1841–1903 is interaction with FGF13; the sequence is DLPMVSGDRI…ITTTLRRKHE (63 aa). In terms of domain architecture, IQ spans 1903 to 1932; sequence EEVSATVIQRAFRRHLLQRSVKHASFLFRQ. Residues 1963–1982 are compositionally biased toward low complexity; it reads SGPLSSSSISSTSFPPSYDS. Residues 1963-2019 form a disordered region; it reads SGPLSSSSISSTSFPPSYDSVTRATSDNLPVRASDYSRSEDLADFPPSPDRDRESIV. Residues 1977–1980 are interaction with NEDD4, NEDD4L and WWP2; sequence PPSY.

The protein belongs to the sodium channel (TC 1.A.1.10) family. Nav1.5/SCN5A subfamily. In terms of assembly, cannot form the same regulatory interactions with beta subunits as other Navs do. Interacts with the PDZ domain of the syntrophin SNTA1, SNTB1 and SNTB2. Interacts with NEDD4, NEDD4L, WWP2 and GPD1L. Interacts with CALM. Interacts with FGF13; the interaction is direct and may regulate SNC5A density at membranes and function. Interacts with FGF12 and FGF14. Interacts with ANK3. Interacts with PKP2 (via N-terminus). Interacts with TMEM233. Interacts with XIRP2; the interaction is required for normal action potential configuration in the heart. Phosphorylation at Ser-1505 by PKC in a highly conserved cytoplasmic loop slows inactivation of the sodium channel and reduces peak sodium currents. Regulated through phosphorylation by CaMK2D. In terms of processing, ubiquitinated by NEDD4L; which promotes its endocytosis. Does not seem to be ubiquitinated by NEDD4 or WWP2. Post-translationally, lacks the cysteine which covalently binds the conotoxin GVIIJ. This cysteine (position 868) is speculated in other sodium channel subunits alpha to be implied in covalent binding with the sodium channel subunit beta-2 or beta-4. N-glycosylated at Asn-318, probably hinders potential interaction with regulatory subunits. In terms of tissue distribution, expressed in the myocardium (at protein level).

The protein resides in the cell membrane. Its subcellular location is the cytoplasm. It localises to the perinuclear region. It is found in the sarcolemma. The protein localises to the T-tubule. The protein resides in the cell junction. The enzyme catalyses Na(+)(in) = Na(+)(out). With respect to regulation, channel inactivation is regulated by intracellular calcium levels. It is a tetrodotoxin-resistant voltage-gated Na(+) channel (Nav). Pore-forming subunit of Nav1.5, a voltage-gated sodium (Nav) channel that directly mediates the depolarizing phase of action potentials in excitable membranes. Navs, also called VGSCs (voltage-gated sodium channels) or VDSCs (voltage-dependent sodium channels), operate by switching between closed and open conformations depending on the voltage difference across the membrane. In the open conformation they allow Na(+) ions to selectively pass through the pore, along their electrochemical gradient. The influx of Na(+) ions provokes membrane depolarization, initiating the propagation of electrical signals throughout cells and tissues. Nav1.5 is the predominant sodium channel expressed in myocardial cells and it is responsible for the initial upstroke of the action potential in cardiac myocytes, thereby initiating the heartbeat. Required for normal electrical conduction including formation of the infranodal ventricular conduction system and normal action potential configuration, as a result of its interaction with XIRP2. The chain is Sodium channel protein type 5 subunit alpha from Mus musculus (Mouse).